The following is a 417-amino-acid chain: NADH-quinone oxidoreductase subunit D (417 aa).

It belongs to the complex I 49 kDa subunit family. NDH-1 is composed of 14 different subunits. Subunits NuoB, C, D, E, F, and G constitute the peripheral sector of the complex.

The protein localises to the cell inner membrane. The enzyme catalyses a quinone + NADH + 5 H(+)(in) = a quinol + NAD(+) + 4 H(+)(out). Functionally, NDH-1 shuttles electrons from NADH, via FMN and iron-sulfur (Fe-S) centers, to quinones in the respiratory chain. The immediate electron acceptor for the enzyme in this species is believed to be ubiquinone. Couples the redox reaction to proton translocation (for every two electrons transferred, four hydrogen ions are translocated across the cytoplasmic membrane), and thus conserves the redox energy in a proton gradient. In Paraburkholderia xenovorans (strain LB400), this protein is NADH-quinone oxidoreductase subunit D.